The primary structure comprises 352 residues: 3-isopropylmalate dehydrogenase (352 aa).

Substrate contacts are provided by Arg-96, Arg-106, Arg-134, and Asp-220. The Mg(2+) site is built by Asp-220, Asp-244, and Asp-248. An NAD(+)-binding site is contributed by 277–289; sequence GSAPDIAGKNLAN.

Belongs to the isocitrate and isopropylmalate dehydrogenases family. LeuB type 1 subfamily. Homodimer. It depends on Mg(2+) as a cofactor. Mn(2+) serves as cofactor.

It localises to the cytoplasm. It catalyses the reaction (2R,3S)-3-isopropylmalate + NAD(+) = 4-methyl-2-oxopentanoate + CO2 + NADH. The protein operates within amino-acid biosynthesis; L-leucine biosynthesis; L-leucine from 3-methyl-2-oxobutanoate: step 3/4. Its function is as follows. Catalyzes the oxidation of 3-carboxy-2-hydroxy-4-methylpentanoate (3-isopropylmalate) to 3-carboxy-4-methyl-2-oxopentanoate. The product decarboxylates to 4-methyl-2 oxopentanoate. This Desulfitobacterium hafniense (strain Y51) protein is 3-isopropylmalate dehydrogenase.